We begin with the raw amino-acid sequence, 477 residues long: tRNA-2-methylthio-N(6)-dimethylallyladenosine synthase (477 aa).

Residues 3–120 enclose the MTTase N-terminal domain; that stretch reads KKLHIKTWGC…LPTMIKQVQE (118 aa). The [4Fe-4S] cluster site is built by C12, C49, C83, C157, C161, and C164. The Radical SAM core domain occupies 143–375; that stretch reads RAEGATAFVS…QHVINNQSMQ (233 aa). One can recognise a TRAM domain in the interval 378-441; it reads RAMLGSTQRI…PNSLRGKFLR (64 aa).

Belongs to the methylthiotransferase family. MiaB subfamily. In terms of assembly, monomer. [4Fe-4S] cluster is required as a cofactor.

It is found in the cytoplasm. The catalysed reaction is N(6)-dimethylallyladenosine(37) in tRNA + (sulfur carrier)-SH + AH2 + 2 S-adenosyl-L-methionine = 2-methylsulfanyl-N(6)-dimethylallyladenosine(37) in tRNA + (sulfur carrier)-H + 5'-deoxyadenosine + L-methionine + A + S-adenosyl-L-homocysteine + 2 H(+). Its function is as follows. Catalyzes the methylthiolation of N6-(dimethylallyl)adenosine (i(6)A), leading to the formation of 2-methylthio-N6-(dimethylallyl)adenosine (ms(2)i(6)A) at position 37 in tRNAs that read codons beginning with uridine. The protein is tRNA-2-methylthio-N(6)-dimethylallyladenosine synthase of Aeromonas hydrophila subsp. hydrophila (strain ATCC 7966 / DSM 30187 / BCRC 13018 / CCUG 14551 / JCM 1027 / KCTC 2358 / NCIMB 9240 / NCTC 8049).